The following is a 601-amino-acid chain: Probable serine/threonine-protein kinase WNK3 (601 aa).

In terms of domain architecture, Protein kinase spans 34-291; it reads GRFNEILGKG…ARELLDDPFL (258 aa). ATP contacts are provided by residues 114-117 and K164; that span reads TELF. The Proton acceptor role is filled by D181. Disordered regions lie at residues 470-498 and 551-601; these read GWRPGPATDDDDDDDLVGGGDDPDAPGGA and ADDD…SEQP. Over residues 477-493 the composition is skewed to acidic residues; it reads TDDDDDDDLVGGGDDPD. The segment covering 560 to 571 has biased composition (polar residues); sequence LQGSSSDTGGSN. Residues 572–583 show a composition bias toward basic and acidic residues; that stretch reads HEQHAMGKDKEV.

Belongs to the protein kinase superfamily. Ser/Thr protein kinase family. WNK subfamily.

It catalyses the reaction L-seryl-[protein] + ATP = O-phospho-L-seryl-[protein] + ADP + H(+). The enzyme catalyses L-threonyl-[protein] + ATP = O-phospho-L-threonyl-[protein] + ADP + H(+). The chain is Probable serine/threonine-protein kinase WNK3 (WNK3) from Oryza sativa subsp. japonica (Rice).